The chain runs to 460 residues: MNTSAPPAVSPNITVLAPGKGPWQVAFIGITTGLLSLATVTGNLLVLISFKVNTELKTVNNYFLLSLACADLIIGTFSMNLYTTYLLMGHWALGTLACDLWLALDYVASNASVMNLLLISFDRYFSVTRPLSYRAKRTPRRAALMIGLAWLVSFVLWAPAILFWQYLVGERTVLAGQCYIQFLSQPIITFGTAMAAFYLPVTVMCTLYWRIYRETENRARELAALQGSETPGKGGGSSSSSERSQPGAEGSPETPPGRCCRCCRAPRLLQAYSWKEEEEEDEGSMESLTSSEGEEPGSEVVIKMPMVDPEAQAPTKQPPRSSPNTVKRPTKKGRDRAGKGQKPRGKEQLAKRKTFSLVKEKKAARTLSAILLAFILTWTPYNIMVLVSTFCKDCVPETLWELGYWLCYVNSTINPMCYALCNKAFRDTFRLLLLCRWDKRRWRKIPKRPGSVHRTPSRQC.

At 1-22 (MNTSAPPAVSPNITVLAPGKGP) the chain is on the extracellular side. Residues N2 and N12 are each glycosylated (N-linked (GlcNAc...) asparagine). The helical transmembrane segment at 23–48 (WQVAFIGITTGLLSLATVTGNLLVLI) threads the bilayer. Topologically, residues 49-62 (SFKVNTELKTVNNY) are cytoplasmic. The helical transmembrane segment at 63 to 84 (FLLSLACADLIIGTFSMNLYTT) threads the bilayer. Residues 85-95 (YLLMGHWALGT) are Extracellular-facing. The helical transmembrane segment at 96-121 (LACDLWLALDYVASNASVMNLLLISF) threads the bilayer. Residues C98 and C178 are joined by a disulfide bond. Residues 122 to 142 (DRYFSVTRPLSYRAKRTPRRA) are Cytoplasmic-facing. The helical transmembrane segment at 143–164 (ALMIGLAWLVSFVLWAPAILFW) threads the bilayer. At 165 to 185 (QYLVGERTVLAGQCYIQFLSQ) the chain is on the extracellular side. A helical transmembrane segment spans residues 186–209 (PIITFGTAMAAFYLPVTVMCTLYW). Residues 210 to 366 (RIYRETENRA…LVKEKKAART (157 aa)) are Cytoplasmic-facing. 3 disordered regions span residues 225-256 (LQGS…ETPP), 274-297 (WKEE…EEPG), and 310-351 (EAQA…QLAK). At T230 the chain carries Phosphothreonine. Over residues 238-247 (SSSSERSQPG) the composition is skewed to low complexity. Positions 328–343 (RPTKKGRDRAGKGQKP) are enriched in basic residues. A helical transmembrane segment spans residues 367 to 390 (LSAILLAFILTWTPYNIMVLVSTF). Topologically, residues 391 to 397 (CKDCVPE) are extracellular. Residues 398-420 (TLWELGYWLCYVNSTINPMCYAL) traverse the membrane as a helical segment. The Cytoplasmic segment spans residues 421–460 (CNKAFRDTFRLLLLCRWDKRRWRKIPKRPGSVHRTPSRQC). T428 is subject to Phosphothreonine. S451 carries the phosphoserine modification. Phosphothreonine is present on T455. The residue at position 457 (S457) is a Phosphoserine.

The protein belongs to the G-protein coupled receptor 1 family. Muscarinic acetylcholine receptor subfamily. CHRM1 sub-subfamily. As to quaternary structure, interacts with GPRASP2. Interacts with TMEM147.

The protein resides in the cell membrane. The protein localises to the postsynaptic cell membrane. The muscarinic acetylcholine receptor mediates various cellular responses, including inhibition of adenylate cyclase, breakdown of phosphoinositides and modulation of potassium channels through the action of G proteins. Primary transducing effect is Pi turnover. In Homo sapiens (Human), this protein is Muscarinic acetylcholine receptor M1 (CHRM1).